Reading from the N-terminus, the 302-residue chain is MAEITAALVRELREATGAGMMDCKKALTEAAGDMEAAIDWLRTKGLSQAAKKSGRTTAEGLVGVASAKNRAAMVEVNAETDFVGRNEAFQAFVEQVAHVALEVGDDLDAIKAGKVPSGRTVADELTHLIATIGENMAIRRAKVLSVESGVVASYVHSALRPGIGKIGVLAALEAPSESDALLTLGRQIGMHVAATRPAALDVASVDPEALERERAVLIEQARESGKPEAIIEKMVEGRIRKFYEEVVLLEQVWVLDGESRVAKVVEKAGAKLVGFERFQLGEGIEKEESDFAAEVAAAAGTK.

Residues 80 to 83 (TDFV) are involved in Mg(2+) ion dislocation from EF-Tu.

It belongs to the EF-Ts family.

It localises to the cytoplasm. Associates with the EF-Tu.GDP complex and induces the exchange of GDP to GTP. It remains bound to the aminoacyl-tRNA.EF-Tu.GTP complex up to the GTP hydrolysis stage on the ribosome. The polypeptide is Elongation factor Ts (Gluconobacter oxydans (strain 621H) (Gluconobacter suboxydans)).